The primary structure comprises 322 residues: Pyridoxal kinase (322 aa).

An N-acetylmethionine modification is found at M1. Pyridoxal contacts are provided by S22 and T57. T57 lines the pyridoxal 5'-phosphate pocket. The residue at position 69 (S69) is a Phosphoserine. D123 provides a ligand contact to ATP. D123 contributes to the Na(+) binding site. D128 lines the Mg(2+) pocket. Residue T158 coordinates Na(+). An ATP-binding site is contributed by 160-163; it reads NQFE. A Phosphoserine modification is found at S174. A Na(+)-binding site is contributed by T196. Position 196-197 (196-197) interacts with ATP; the sequence is TS. Residue S223 is modified to Phosphoserine. Residues 236-238 and T243 each bind ATP; that span reads VDA. 244 to 245 serves as a coordination point for pyridoxal 5'-phosphate; that stretch reads GD. D245 serves as the catalytic Proton acceptor. Residue S295 is modified to Phosphoserine.

It belongs to the pyridoxine kinase family. In terms of assembly, homodimer. Zn(2+) serves as cofactor. Requires Mg(2+) as cofactor. Post-translationally, the N-terminus is blocked.

The protein localises to the cytoplasm. It localises to the cytosol. The catalysed reaction is pyridoxal + ATP = pyridoxal 5'-phosphate + ADP + H(+). It carries out the reaction pyridoxamine + ATP = pyridoxamine 5'-phosphate + ADP + H(+). The enzyme catalyses pyridoxine + ATP = pyridoxine 5'-phosphate + ADP + H(+). It participates in cofactor metabolism; pyridoxal 5'-phosphate salvage; pyridoxal 5'-phosphate from pyridoxal: step 1/1. The protein operates within cofactor metabolism; pyridoxal 5'-phosphate salvage; pyridoxine 5'-phosphate from pyridoxine: step 1/1. It functions in the pathway cofactor metabolism; pyridoxal 5'-phosphate salvage; pyridoxamine 5'-phosphate from pyridoxamine: step 1/1. With respect to regulation, activity is increased in the presence of K(+)or Na(+). Catalyzes the phosphorylation of the dietary vitamin B6 vitamers pyridoxal (PL), pyridoxine (PN) and pyridoxamine (PM) to form pyridoxal 5'-phosphate (PLP), pyridoxine 5'-phosphate (PNP) and pyridoxamine 5'-phosphate (PMP), respectively. PLP is the active form of vitamin B6, and acts as a cofactor for over 140 different enzymatic reactions. The protein is Pyridoxal kinase (PDXK) of Sus scrofa (Pig).